A 519-amino-acid polypeptide reads, in one-letter code: 2,3-bisphosphoglycerate-independent phosphoglycerate mutase (519 aa).

Positions 9 and 60 each coordinate Mn(2+). Residue serine 60 is the Phosphoserine intermediate of the active site. Positions 76-91 are enriched in basic and acidic residues; the sequence is DSARVSDSIARSRGEA. The interval 76 to 102 is disordered; that stretch reads DSARVSDSIARSRGEAPPDDDAQDPPF. Substrate is bound by residues histidine 134, 163–164, arginine 195, arginine 201, 267–270, and lysine 341; these read RD and RSDR. Positions 408, 412, 449, 450, and 466 each coordinate Mn(2+).

The protein belongs to the BPG-independent phosphoglycerate mutase family. Mn(2+) serves as cofactor.

It catalyses the reaction (2R)-2-phosphoglycerate = (2R)-3-phosphoglycerate. Its pathway is carbohydrate degradation; glycolysis; pyruvate from D-glyceraldehyde 3-phosphate: step 3/5. Functionally, catalyzes the interconversion of 2-phosphoglycerate and 3-phosphoglycerate. The protein is 2,3-bisphosphoglycerate-independent phosphoglycerate mutase of Haloarcula marismortui (strain ATCC 43049 / DSM 3752 / JCM 8966 / VKM B-1809) (Halobacterium marismortui).